We begin with the raw amino-acid sequence, 955 residues long: Kinesin heavy chain isoform 5C (955 aa).

Residues 8–327 enclose the Kinesin motor domain; it reads SIKVMCRFRP…LMFGQRAKTI (320 aa). 8 residues coordinate ATP: Gln87, Ser89, Ser90, Gly91, Lys92, Thr93, His94, and Lys99. A microtubule-binding region spans residues 174-315; sequence VSSPEEVMDV…PSVFNEAETK (142 aa). Residues 332-366 are a coiled coil; it reads SVNLELTAEEWKKKYEKEKEKNKALKSVIQHLEVE. Thr403 carries the phosphothreonine modification. Coiled coils occupy residues 413–538 and 590–913; these read KEKY…LQEL and ISKM…KNMA. The segment at 859–955 is globular; sequence CELPKLEKRL…GSSNSTHYQK (97 aa). The segment at 909–955 is disordered; it reads AKNMARRAHSAQIAKPIRPGHYPASSPTAVHAVRGGGGSSNSTHYQK.

It belongs to the TRAFAC class myosin-kinesin ATPase superfamily. Kinesin family. Kinesin subfamily. As to quaternary structure, oligomer composed of two heavy chains and two light chains. Interacts with GRIP1. Interacts with TRAK1. Interacts with ZFYVE27. Interacts with KLC3.

It is found in the cytoplasm. The protein localises to the cytoskeleton. It localises to the cell projection. The protein resides in the dendrite. It catalyses the reaction ATP + H2O = ADP + phosphate + H(+). In terms of biological role, microtubule-associated force-producing protein that may play a role in organelle transport. Has ATPase activity. Involved in synaptic transmission. Mediates dendritic trafficking of mRNAs. Required for anterograde axonal transportation of MAPK8IP3/JIP3 which is essential for MAPK8IP3/JIP3 function in axon elongation. The sequence is that of Kinesin heavy chain isoform 5C (Kif5c) from Rattus norvegicus (Rat).